Consider the following 154-residue polypeptide: MAIELDLQLAVEDQNGLPSAQDFQTWLDKTIPPFQPQAEVTIRIVDSQESHQLNHDYRGKDKPTNVLSFPFEAPPGMEMDLLGDLVICRQVVEQEAIEQDKPLMAHWAHMVVHGSLHLLGYDHIEDDEAEEMESLETEIMQGMGFTDPYLAEKE.

H113, H117, and H123 together coordinate Zn(2+).

This sequence belongs to the endoribonuclease YbeY family. The cofactor is Zn(2+).

The protein resides in the cytoplasm. Single strand-specific metallo-endoribonuclease involved in late-stage 70S ribosome quality control and in maturation of the 3' terminus of the 16S rRNA. In Vibrio vulnificus (strain YJ016), this protein is Endoribonuclease YbeY.